The following is a 234-amino-acid chain: Peroxiredoxin (234 aa).

In terms of domain architecture, Thioredoxin spans Pro-6–Val-161. The active-site Cysteine sulfenic acid (-SOH) intermediate is the Cys-48. Position 124 (Arg-124) interacts with substrate. Cysteines 203 and 209 form a disulfide.

The protein belongs to the peroxiredoxin family. Prx6 subfamily. Homodecamer. Pentamer of dimers that assemble into a ring structure.

It localises to the cytoplasm. It carries out the reaction a hydroperoxide + [thioredoxin]-dithiol = an alcohol + [thioredoxin]-disulfide + H2O. In terms of biological role, thiol-specific peroxidase that catalyzes the reduction of hydrogen peroxide and organic hydroperoxides to water and alcohols, respectively. Plays a role in cell protection against oxidative stress by detoxifying peroxides. This Ignicoccus hospitalis (strain KIN4/I / DSM 18386 / JCM 14125) protein is Peroxiredoxin.